The chain runs to 339 residues: Alcohol dehydrogenase (339 aa).

7 residues coordinate Zn(2+): Cys38, His61, Cys92, Cys95, Cys98, Cys106, and Cys148. Residues 172–177, Asp195, Lys200, 260–262, and Arg331 contribute to the NAD(+) site; these read GIGGLG and VGL.

It belongs to the zinc-containing alcohol dehydrogenase family. Requires Zn(2+) as cofactor.

It carries out the reaction a primary alcohol + NAD(+) = an aldehyde + NADH + H(+). The enzyme catalyses a secondary alcohol + NAD(+) = a ketone + NADH + H(+). With respect to regulation, the rate-limiting step is NADH release. Catabolite repression. Its function is as follows. Active with primary alcohols, including methanol. The chain is Alcohol dehydrogenase (adh) from Geobacillus stearothermophilus (Bacillus stearothermophilus).